The chain runs to 418 residues: L-rhamnose isomerase (418 aa).

The Mn(2+) site is built by His-262, Asp-294, and Asp-296.

Belongs to the rhamnose isomerase family. In terms of assembly, homotetramer. Mn(2+) serves as cofactor.

It is found in the cytoplasm. The catalysed reaction is L-rhamnopyranose = L-rhamnulose. The protein operates within carbohydrate degradation; L-rhamnose degradation; glycerone phosphate from L-rhamnose: step 1/3. In terms of biological role, catalyzes the interconversion of L-rhamnose and L-rhamnulose. This Yersinia pestis bv. Antiqua (strain Antiqua) protein is L-rhamnose isomerase.